Here is a 102-residue protein sequence, read N- to C-terminus: NADH-quinone oxidoreductase subunit K (102 aa).

A run of 3 helical transmembrane segments spans residues 5-25 (LEHY…GIFL), 31-51 (IVIL…LVAF), and 66-86 (FVLT…VVFF).

Belongs to the complex I subunit 4L family. In terms of assembly, NDH-1 is composed of 14 different subunits. Subunits NuoA, H, J, K, L, M, N constitute the membrane sector of the complex.

Its subcellular location is the cell inner membrane. It catalyses the reaction a quinone + NADH + 5 H(+)(in) = a quinol + NAD(+) + 4 H(+)(out). NDH-1 shuttles electrons from NADH, via FMN and iron-sulfur (Fe-S) centers, to quinones in the respiratory chain. The immediate electron acceptor for the enzyme in this species is believed to be ubiquinone. Couples the redox reaction to proton translocation (for every two electrons transferred, four hydrogen ions are translocated across the cytoplasmic membrane), and thus conserves the redox energy in a proton gradient. This is NADH-quinone oxidoreductase subunit K from Parvibaculum lavamentivorans (strain DS-1 / DSM 13023 / NCIMB 13966).